The sequence spans 935 residues: uncharacterized protein (935 aa).

Disordered stretches follow at residues 1–32 (MDIG…QNNN), 74–228 (NNNN…YNNG), 265–287 (NNEN…NNNN), 342–376 (NQQK…SSKT), 394–414 (SPTQ…QQQY), 466–491 (KNIN…NNNI), 516–559 (PHQQ…TSTI), 727–755 (SPSS…ISPS), and 778–799 (GGGS…NVQN). Over residues 74-227 (NNNNNTTNNN…NNNDDNIYNN (154 aa)) the composition is skewed to low complexity. Positions 262-331 (KKNNNENKKK…NNINNNNNKI (70 aa)) form a coiled coil. Over residues 265-274 (NNENKKKNND) the composition is skewed to basic and acidic residues. Residues 275–287 (NENNNYPNFNNNN) are compositionally biased toward low complexity. The segment covering 367–376 (LSHNSESSKT) has biased composition (polar residues). Residues 397 to 414 (QQQQQQQQQQQQQQQQQY) show a composition bias toward low complexity. The span at 522 to 559 (SSPTSSSTSTSSTTSSSSSSSSSSSSSSSSSTSSTSTI) shows a compositional bias: low complexity. Residues 778–791 (GGGSSGGGGSGGGV) are compositionally biased toward gly residues.

This is an uncharacterized protein from Dictyostelium discoideum (Social amoeba).